A 185-amino-acid polypeptide reads, in one-letter code: Large ribosomal subunit protein uL5 (185 aa).

This sequence belongs to the universal ribosomal protein uL5 family. Part of the 50S ribosomal subunit; part of the 5S rRNA/L5/L18/L25 subcomplex. Contacts the 5S rRNA and the P site tRNA. Forms a bridge to the 30S subunit in the 70S ribosome.

This is one of the proteins that bind and probably mediate the attachment of the 5S RNA into the large ribosomal subunit, where it forms part of the central protuberance. In the 70S ribosome it contacts protein S13 of the 30S subunit (bridge B1b), connecting the 2 subunits; this bridge is implicated in subunit movement. Contacts the P site tRNA; the 5S rRNA and some of its associated proteins might help stabilize positioning of ribosome-bound tRNAs. This Bradyrhizobium sp. (strain ORS 278) protein is Large ribosomal subunit protein uL5.